Here is a 311-residue protein sequence, read N- to C-terminus: Glutaminase (311 aa).

The substrate site is built by Ser-66, Asn-116, Glu-162, Asn-169, Tyr-193, Tyr-245, and Val-263.

Belongs to the glutaminase family. In terms of assembly, homotetramer.

It catalyses the reaction L-glutamine + H2O = L-glutamate + NH4(+). The sequence is that of Glutaminase from Rhodopseudomonas palustris (strain BisB5).